A 603-amino-acid chain; its full sequence is uncharacterized protein (603 aa).

A disordered region spans residues 257 to 281 (AGEAASSDHDQKISRVTRKRPREPK).

This is an uncharacterized protein from Saccharomyces cerevisiae (strain ATCC 204508 / S288c) (Baker's yeast).